The primary structure comprises 295 residues: Small ribosomal subunit protein uS2 (295 aa).

The segment at 263-295 is disordered; it reads KKFSKTKNIDEETNTEFEQALNDADENKNSDNA.

It belongs to the universal ribosomal protein uS2 family.

In Rickettsia massiliae (strain Mtu5), this protein is Small ribosomal subunit protein uS2.